Reading from the N-terminus, the 523-residue chain is Non-specific phospholipase C3 (523 aa).

The segment at 44–64 is disordered; that stretch reads DGVSESEPRSNPLSTSDPNSA. Positions 52 to 64 are enriched in polar residues; it reads RSNPLSTSDPNSA.

It belongs to the bacterial phospholipase C family. Expressed in root tips, cotyledons, on leaf margins, stems, young anthers and funiculus.

It carries out the reaction a 1-acyl-sn-glycero-3-phosphate + H2O = a 1-acyl-sn-glycerol + phosphate. In terms of biological role, possesses specific phosphatase activity toward lysophosphatidic acid (LPA) in vitro. Does not show phospholipase C activity. May play a role in signal transduction and storage lipid synthesis. May be involved in brassinolide-mediated signaling in root development. The protein is Non-specific phospholipase C3 (NPC3) of Arabidopsis thaliana (Mouse-ear cress).